The sequence spans 366 residues: Growth hormone secretagogue receptor type 1 (366 aa).

Residues 1-40 (MWNATPSEEPGFNLTLADLDWDASPGNDSLGDELLQLFPA) lie on the Extracellular side of the membrane. Residues asparagine 13 and asparagine 27 are each glycosylated (N-linked (GlcNAc...) asparagine). A helical transmembrane segment spans residues 41 to 66 (PLLAGVTATCVALFVVGIAGNLLTML). Over 67–72 (VVSRFR) the chain is Cytoplasmic. Residues 73 to 96 (ELRTTTNLYLSSMAFSDLLIFLCM) traverse the membrane as a helical segment. Residues 97 to 117 (PLDLVRLWQYRPWNFGDLLCK) lie on the Extracellular side of the membrane. A disulfide bond links cysteine 116 and cysteine 198. The chain crosses the membrane as a helical span at residues 118 to 139 (LFQFVSESCTYATVLTITALSV). Residues 140–162 (ERYFAICFPLRAKVVVTKGRVKL) lie on the Cytoplasmic side of the membrane. The chain crosses the membrane as a helical span at residues 163–183 (VIFVIWAVAFCSAGPIFVLVG). The Extracellular segment spans residues 184–211 (VEHENGTDPWDTNECRPTEFAVRSGLLT). The helical transmembrane segment at 212-235 (VMVWVSSIFFFLPVFCLTVLYSLI) threads the bilayer. The Cytoplasmic portion of the chain corresponds to 236–263 (GRKLWRRRRGDAVVGASLRDQNHKQTVK). A helical membrane pass occupies residues 264-285 (MLAVVVFAFILCWLPFHVGRYL). At 286–302 (FSKSFEPGSLEIAQISQ) the chain is on the extracellular side. The helical transmembrane segment at 303–326 (YCNLVSFVLFYLSAAINPILYNIM) threads the bilayer. Topologically, residues 327–366 (SKKYRVAVFRLLGFEPFSQRKLSTLKDESSRAWTESSINT) are cytoplasmic.

Belongs to the G-protein coupled receptor 1 family. As to expression, pituitary and hypothalamus.

The protein resides in the cell membrane. In terms of biological role, receptor for ghrelin, coupled to G-alpha-11 proteins. Stimulates growth hormone secretion. Also binds other growth hormone releasing peptides (GHRP) (e.g. Met-enkephalin and GHRP-6) as well as non-peptide, low molecular weight secretagogues (e.g. L-692,429, MK-0677, adenosine). This is Growth hormone secretagogue receptor type 1 (GHSR) from Homo sapiens (Human).